Here is a 382-residue protein sequence, read N- to C-terminus: MGCFGSPTSKQSDVNSEDSKSQKRRSDAISRQLQKDKQLYRATHRLLLLGAGESGKSTIVKQMRILHVDGFSETEKKQKIDDIKKNIRDAILTITGAMSTLNPPVALEKKENEPRVEYIQDYASSPDFNYPPEFYEHTEELWKDKGVLQTYERSNEYQLIDCAKYFLDRVSTIKNPNYTPNEQDILRCRVLTSGIFETRFQVDKVNFHMFDVGGQRDERRKWIQCFNDVTAIIFVTACSSYNMVLREDPTQNRLRESLDLFKSIWNNRWLRTISIILFLNKQDLLAEKIKAGKSKLSEYFSEFNKYQTPSDAIMESNDDPEVIRAKYFIRDEFLRISTASGDGKHYCYPHFTCAVDTENIKRVFNDCRDIIQRMHLRQYELL.

Residues 1–14 are compositionally biased toward polar residues; the sequence is MGCFGSPTSKQSDV. Residues 1–31 are disordered; it reads MGCFGSPTSKQSDVNSEDSKSQKRRSDAISR. Residue G2 is the site of N-palmitoyl glycine attachment. C3 is lipidated: S-palmitoyl cysteine. Positions 17–31 are enriched in basic and acidic residues; sequence EDSKSQKRRSDAISR. Residues 42–382 form the G-alpha domain; sequence ATHRLLLLGA…RMHLRQYELL (341 aa). The interval 45 to 58 is G1 motif; sequence RLLLLGAGESGKST. Residues 50–57, 51–58, 186–192, 211–215, 212–216, 280–283, 281–284, and A354 contribute to the GTP site; these read GAGESGKS, AGESGKST, LRCRVLT, DVGGQ, VGGQR, NKQD, and KQDL. S57 and T192 together coordinate Mg(2+). Residues 184-192 are G2 motif; sequence DILRCRVLT. A G3 motif region spans residues 207–216; the sequence is FHMFDVGGQR. The tract at residues 276-283 is G4 motif; it reads ILFLNKQD. Residues 352-357 form a G5 motif region; the sequence is TCAVDT.

The protein belongs to the G-alpha family. G(s) subfamily. In terms of assembly, g proteins are composed of 3 units; alpha, beta and gamma. The alpha chain contains the guanine nucleotide binding site.

Functionally, guanine nucleotide-binding proteins (G proteins) are involved as modulators or transducers in various transmembrane signaling systems. The G(s) protein is involved in hormonal regulation of adenylate cyclase: it activates the cyclase. This chain is Guanine nucleotide-binding protein G(s) subunit alpha (G-salpha60A), found in Drosophila pseudoobscura pseudoobscura (Fruit fly).